The sequence spans 352 residues: Probable protein phosphatase 2C 42 (352 aa).

Residues 26–321 (AYASSAMQGY…DNMSVILVRF (296 aa)) enclose the PPM-type phosphatase domain. 4 residues coordinate Mn(2+): D62, G63, D267, and D312. A disordered region spans residues 328–352 (RGARAATSSTSTGTVPSRHSKSISL). Residues 329–341 (GARAATSSTSTGT) are compositionally biased toward low complexity.

The protein belongs to the PP2C family. The cofactor is Mg(2+). It depends on Mn(2+) as a cofactor.

It catalyses the reaction O-phospho-L-seryl-[protein] + H2O = L-seryl-[protein] + phosphate. It carries out the reaction O-phospho-L-threonyl-[protein] + H2O = L-threonyl-[protein] + phosphate. The protein is Probable protein phosphatase 2C 42 of Oryza sativa subsp. japonica (Rice).